A 318-amino-acid polypeptide reads, in one-letter code: Acetaldehyde dehydrogenase 2 (318 aa).

9 to 12 (SGNI) contacts NAD(+). C129 functions as the Acyl-thioester intermediate in the catalytic mechanism. Residues 160–168 (SAGPGTRAN) and N288 contribute to the NAD(+) site.

The protein belongs to the acetaldehyde dehydrogenase family.

It catalyses the reaction acetaldehyde + NAD(+) + CoA = acetyl-CoA + NADH + H(+). The polypeptide is Acetaldehyde dehydrogenase 2 (Mycolicibacterium vanbaalenii (strain DSM 7251 / JCM 13017 / BCRC 16820 / KCTC 9966 / NRRL B-24157 / PYR-1) (Mycobacterium vanbaalenii)).